The chain runs to 371 residues: Probable tRNA sulfurtransferase (371 aa).

The 103-residue stretch at 54–156 folds into the THUMP domain; the sequence is NANIEALSEV…NEMTYFYHKV (103 aa). Residues 174–175, 199–200, lysine 254, glycine 276, and glutamine 285 each bind ATP; these read LF and NF.

Belongs to the ThiI family.

The protein resides in the cytoplasm. The enzyme catalyses [ThiI sulfur-carrier protein]-S-sulfanyl-L-cysteine + a uridine in tRNA + 2 reduced [2Fe-2S]-[ferredoxin] + ATP + H(+) = [ThiI sulfur-carrier protein]-L-cysteine + a 4-thiouridine in tRNA + 2 oxidized [2Fe-2S]-[ferredoxin] + AMP + diphosphate. It carries out the reaction [ThiS sulfur-carrier protein]-C-terminal Gly-Gly-AMP + S-sulfanyl-L-cysteinyl-[cysteine desulfurase] + AH2 = [ThiS sulfur-carrier protein]-C-terminal-Gly-aminoethanethioate + L-cysteinyl-[cysteine desulfurase] + A + AMP + 2 H(+). It participates in cofactor biosynthesis; thiamine diphosphate biosynthesis. Its function is as follows. Catalyzes the ATP-dependent transfer of a sulfur to tRNA to produce 4-thiouridine in position 8 of tRNAs, which functions as a near-UV photosensor. Also catalyzes the transfer of sulfur to the sulfur carrier protein ThiS, forming ThiS-thiocarboxylate. This is a step in the synthesis of thiazole, in the thiamine biosynthesis pathway. The sulfur is donated as persulfide by IscS. The chain is Probable tRNA sulfurtransferase from Saccharolobus solfataricus (strain ATCC 35092 / DSM 1617 / JCM 11322 / P2) (Sulfolobus solfataricus).